The sequence spans 122 residues: Small ribosomal subunit protein uS13 (122 aa).

Over residues 95–116 (GLPVRGQKTKTNARTRKGRRKT) the composition is skewed to basic residues. Residues 95 to 122 (GLPVRGQKTKTNARTRKGRRKTVGAATK) form a disordered region.

Belongs to the universal ribosomal protein uS13 family. In terms of assembly, part of the 30S ribosomal subunit. Forms a loose heterodimer with protein S19. Forms two bridges to the 50S subunit in the 70S ribosome.

Located at the top of the head of the 30S subunit, it contacts several helices of the 16S rRNA. In the 70S ribosome it contacts the 23S rRNA (bridge B1a) and protein L5 of the 50S subunit (bridge B1b), connecting the 2 subunits; these bridges are implicated in subunit movement. Contacts the tRNAs in the A and P-sites. The polypeptide is Small ribosomal subunit protein uS13 (Campylobacter concisus (strain 13826)).